A 320-amino-acid polypeptide reads, in one-letter code: Cytochrome f (320 aa).

The first 35 residues, 1-35, serve as a signal peptide directing secretion; that stretch reads MENKNTFSWVKEQMTRSISVSIMIYVITQTSISNA. Y36, C56, C59, and H60 together coordinate heme. Residues 286 to 306 traverse the membrane as a helical segment; sequence VQGLLFFFASVILAQVFLVLK.

Belongs to the cytochrome f family. The 4 large subunits of the cytochrome b6-f complex are cytochrome b6, subunit IV (17 kDa polypeptide, petD), cytochrome f and the Rieske protein, while the 4 small subunits are PetG, PetL, PetM and PetN. The complex functions as a dimer. Heme is required as a cofactor.

It localises to the plastid. Its subcellular location is the chloroplast thylakoid membrane. Its function is as follows. Component of the cytochrome b6-f complex, which mediates electron transfer between photosystem II (PSII) and photosystem I (PSI), cyclic electron flow around PSI, and state transitions. The chain is Cytochrome f from Lolium perenne (Perennial ryegrass).